The chain runs to 1295 residues: Phosphoribosylformylglycinamidine synthase (1295 aa).

Positions 304–326 are disordered; it reads WPGAATGSGGEIRDEGATGRGAK. ATP contacts are provided by residues 306–317, 385–387, and alanine 677; these read GAATGSGGEIRD and TGY. Mg(2+)-binding residues include aspartate 678, glutamate 717, asparagine 721, and aspartate 884. A compositionally biased stretch (basic and acidic residues) spans 995–1012; sequence LRDNPESADQEHASRQDD. The segment at 995 to 1017 is disordered; sequence LRDNPESADQEHASRQDDNDPGL. One can recognise a Glutamine amidotransferase type-1 domain in the interval 1042 to 1295; the sequence is VAVLREQGVN…LFRNARKQLG (254 aa). The Nucleophile role is filled by cysteine 1135. Catalysis depends on residues histidine 1260 and glutamate 1262.

The protein in the N-terminal section; belongs to the FGAMS family. In terms of assembly, monomer.

The protein resides in the cytoplasm. It carries out the reaction N(2)-formyl-N(1)-(5-phospho-beta-D-ribosyl)glycinamide + L-glutamine + ATP + H2O = 2-formamido-N(1)-(5-O-phospho-beta-D-ribosyl)acetamidine + L-glutamate + ADP + phosphate + H(+). It functions in the pathway purine metabolism; IMP biosynthesis via de novo pathway; 5-amino-1-(5-phospho-D-ribosyl)imidazole from N(2)-formyl-N(1)-(5-phospho-D-ribosyl)glycinamide: step 1/2. Phosphoribosylformylglycinamidine synthase involved in the purines biosynthetic pathway. Catalyzes the ATP-dependent conversion of formylglycinamide ribonucleotide (FGAR) and glutamine to yield formylglycinamidine ribonucleotide (FGAM) and glutamate. This Sodalis glossinidius (strain morsitans) protein is Phosphoribosylformylglycinamidine synthase.